The chain runs to 122 residues: Large ribosomal subunit protein bL12 (122 aa).

Belongs to the bacterial ribosomal protein bL12 family. As to quaternary structure, homodimer. Part of the ribosomal stalk of the 50S ribosomal subunit. Forms a multimeric L10(L12)X complex, where L10 forms an elongated spine to which 2 to 4 L12 dimers bind in a sequential fashion. Binds GTP-bound translation factors.

In terms of biological role, forms part of the ribosomal stalk which helps the ribosome interact with GTP-bound translation factors. Is thus essential for accurate translation. The chain is Large ribosomal subunit protein bL12 from Azotobacter vinelandii (strain DJ / ATCC BAA-1303).